The chain runs to 322 residues: Cytochrome c biogenesis protein CcsA (322 aa).

Transmembrane regions (helical) follow at residues 2–22 (LFATLEHILTHISFSTISIVI), 44–64 (GMIATFFSITGFLVSRWLSSG), 68–88 (LSNLYESLIFLSWALYILHTI), 143–163 (MLLSYATLLCGSLLSAAILII), 226–246 (VISLGFTLLTIGILCGAVWAN), 260–274 (TWAFITWTIFAIYLH), and 289–309 (VASIGFLIIWICYFGINLLGI).

This sequence belongs to the CcmF/CycK/Ccl1/NrfE/CcsA family. As to quaternary structure, may interact with Ccs1.

It is found in the plastid. Its subcellular location is the chloroplast thylakoid membrane. In terms of biological role, required during biogenesis of c-type cytochromes (cytochrome c6 and cytochrome f) at the step of heme attachment. This Brachypodium distachyon (Purple false brome) protein is Cytochrome c biogenesis protein CcsA.